A 189-amino-acid chain; its full sequence is Photosystem I assembly protein Ycf4 (189 aa).

Transmembrane regions (helical) follow at residues 29 to 49 (WATIVTLGASGFLLAGISSYL) and 69 to 89 (LVMGLYGAAGLLLATYLWLVI).

It belongs to the Ycf4 family.

Its subcellular location is the cellular thylakoid membrane. Functionally, seems to be required for the assembly of the photosystem I complex. The chain is Photosystem I assembly protein Ycf4 from Nostoc punctiforme (strain ATCC 29133 / PCC 73102).